A 78-amino-acid polypeptide reads, in one-letter code: Large ribosomal subunit protein bL28 (78 aa).

It belongs to the bacterial ribosomal protein bL28 family.

This Prochlorococcus marinus (strain MIT 9515) protein is Large ribosomal subunit protein bL28.